The chain runs to 911 residues: Leucine--tRNA ligase (911 aa).

The 'HIGH' region signature appears at 42–52 (PYPSGKLHMGH). Positions 659–663 (TMSKS) match the 'KMSKS' region motif. Residue K662 participates in ATP binding.

The protein belongs to the class-I aminoacyl-tRNA synthetase family.

It localises to the cytoplasm. It carries out the reaction tRNA(Leu) + L-leucine + ATP = L-leucyl-tRNA(Leu) + AMP + diphosphate. The chain is Leucine--tRNA ligase from Delftia acidovorans (strain DSM 14801 / SPH-1).